A 201-amino-acid chain; its full sequence is Putative lipoprotein Hmuk_2215 (201 aa).

Positions 1–22 (MCPRPRRAVLLGLGVAMSAIAG) are cleaved as a signal peptide. Cys23 is subject to N-acetylcysteine. Cys23 is lipidated: S-archaeol cysteine. 2 disordered regions span residues 25–78 (ETAP…ETSE) and 182–201 (ATRA…GDCP). A compositionally biased stretch (basic and acidic residues) spans 69–78 (TRADETETSE).

The protein localises to the cell membrane. The chain is Putative lipoprotein Hmuk_2215 from Halomicrobium mukohataei (strain ATCC 700874 / DSM 12286 / JCM 9738 / NCIMB 13541) (Haloarcula mukohataei).